A 328-amino-acid polypeptide reads, in one-letter code: UDP-glucose 4-epimerase (328 aa).

NAD(+) is bound by residues 20 to 21 (FV), 41 to 46 (VRHAVN), 57 to 58 (DI), 77 to 81 (CAARA), Ser-123, Tyr-149, and Lys-153. Substrate-binding residues include Ser-123 and Tyr-149. Catalysis depends on Tyr-149, which acts as the Proton acceptor. Substrate-binding positions include 198 to 199 (GI) and 215 to 217 (SIN).

Belongs to the NAD(P)-dependent epimerase/dehydratase family. As to quaternary structure, homodimer. Requires NAD(+) as cofactor.

The enzyme catalyses UDP-alpha-D-glucose = UDP-alpha-D-galactose. It participates in bacterial outer membrane biogenesis; LPS O-antigen biosynthesis. Functionally, involved in the metabolism of galactose. Catalyzes the conversion of UDP-galactose (UDP-Gal) to UDP-glucose (UDP-Glc) through a mechanism involving the transient reduction of NAD. The polypeptide is UDP-glucose 4-epimerase (galE) (Vibrio cholerae).